The sequence spans 132 residues: Small ribosomal subunit protein uS9 (132 aa).

The tract at residues 103-132 (NGLLTRDDRTKERKKPGLKRARKAPQYTKR) is disordered. Residues 114-132 (ERKKPGLKRARKAPQYTKR) are compositionally biased toward basic residues.

The protein belongs to the universal ribosomal protein uS9 family.

This is Small ribosomal subunit protein uS9 from Dehalococcoides mccartyi (strain CBDB1).